Reading from the N-terminus, the 580-residue chain is High affinity choline transporter 1 (580 aa).

At 1-6 (MPFHVE) the chain is on the extracellular side. A helical transmembrane segment spans residues 7–27 (GLVAIILFYLLIFLVGIWAAW). At 28–48 (KTKNSGNAEERSEAIIVGGRD) the chain is on the cytoplasmic side. A helical membrane pass occupies residues 49-69 (IGLLVGGFTMTATWVGGGYIN). The Extracellular portion of the chain corresponds to 70 to 81 (GTAEAVYGPGCG). Residues 82–102 (LAWAQAPIGYSLSLILGGLFF) traverse the membrane as a helical segment. Residues 103-125 (AKPMRSKGYVTMLDPFQQIYGKR) are Cytoplasmic-facing. Residues 126–146 (MGGLLFIPALMGEMFWAAAIF) form a helical membrane-spanning segment. Residues 147–164 (SALGATISVIIDVDVNIS) lie on the Extracellular side of the membrane. Residues 165–185 (VIVSALIAILYTLVGGLYSVA) traverse the membrane as a helical segment. The Cytoplasmic segment spans residues 186 to 191 (YTDVVQ). The helical transmembrane segment at 192-212 (LFCIFIGLWISVPFALSHPAV) threads the bilayer. Residues 213–237 (TDIGFTAVHAKYQSPWLGTIESVEV) are Extracellular-facing. A helical transmembrane segment spans residues 238 to 258 (YTWLDNFLLLMLGGIPWQAYF). At 259-274 (QRVLSSSSATYAQVLS) the chain is on the cytoplasmic side. The helical transmembrane segment at 275 to 295 (FLAAFGCLVMALPAICIGAIG) threads the bilayer. The Extracellular segment spans residues 296–317 (ASTDWNQTAYGFPDPKTKEEAD). The N-linked (GlcNAc...) asparagine glycan is linked to Asn-301. Residues 318-338 (MILPIVLQYLCPVYISFFGLG) traverse the membrane as a helical segment. The Cytoplasmic segment spans residues 339–376 (AVSAAVMSSADSSILSASSMFARNIYQLSFRQNASDKE). The helical transmembrane segment at 377–397 (IVWVMRITVFVFGASATAMAL) threads the bilayer. Residues 398–406 (LTKTVYGLW) are Extracellular-facing. Residues 407–427 (YLSSDLVYIIIFPQLLCVLFI) form a helical membrane-spanning segment. The Cytoplasmic portion of the chain corresponds to 428–435 (KGTNTYGA). Residues 436 to 456 (VAGYIFGLFLRITGGEPYLYL) form a helical membrane-spanning segment. Over 457-481 (QPLIFYPGYYPDKNGIYNQRFPFKT) the chain is Extracellular. A helical transmembrane segment spans residues 482–502 (LSMVTSFFTNICVSYLAKYLF). Positions 502-580 (FESGTLPPKL…EGSGTEDNLQ (79 aa)) are mediates interaction with SEC14L1. Residues 503–580 (ESGTLPPKLD…EGSGTEDNLQ (78 aa)) lie on the Cytoplasmic side of the membrane. Positions 527-532 (DKTILV) match the Dileucine-like motif motif.

Belongs to the sodium:solute symporter (SSF) (TC 2.A.21) family. In terms of assembly, homooligomerizes at cell surface. Interacts with SEC14L1; may regulate SLC5A7. In terms of processing, phosphorylated. As to expression, expressed in basal forebrain, brain stem, spinal chord, and striatum. Specific for cholinergic neurons.

Its subcellular location is the presynaptic cell membrane. The protein resides in the cell projection. It is found in the axon. It localises to the early endosome membrane. The protein localises to the cytoplasmic vesicle. Its subcellular location is the secretory vesicle. The protein resides in the synaptic vesicle membrane. It carries out the reaction choline(out) + n Na(+)(out) = choline(in) + n Na(+)(in). Choline uptake activity is regulated by SLC5A7/CHT1 internalization (inactive form) from the cell surface and recycling of internalized SLC5A7/CHT1 into the cell surface (active form). Activated by extracellular chloride ion. Specifically inhibited by nanomolar concentrations of hemicholinium 3. Its function is as follows. High-affinity Na(+)-coupled choline transmembrane symporter. Functions as an electrogenic, voltage-dependent transporter with variable charge/choline stoichiometry. Choline uptake and choline-induced current is also Cl(-)-dependent where Cl(-) is likely a regulatory ion rather than cotransported ion. Plays a critical role in acetylcholine (ACh) synthesis by taking up the substrate choline from the synaptic cleft into the presynaptic nerve terminals after neurotransmitter release. SLC5A7/CHT1-mediated choline high-affinity transport in cholinergic neurons is the rate-limiting step for production of ACh, thereby facilitating communication by subsequent action potentials. Localized predominantly in presynaptic terminal intracellular organelles, and translocated to the plasma membrane in active form in response to neuronal activity. This is High affinity choline transporter 1 from Rattus norvegicus (Rat).